Reading from the N-terminus, the 158-residue chain is 6,7-dimethyl-8-ribityllumazine synthase (158 aa).

Residues Phe-23, Ser-61–Glu-63, and Ala-85–Ile-87 each bind 5-amino-6-(D-ribitylamino)uracil. Glu-90 to Thr-91 is a binding site for (2S)-2-hydroxy-3-oxobutyl phosphate. The Proton donor role is filled by His-93. Phe-118 provides a ligand contact to 5-amino-6-(D-ribitylamino)uracil. Residue Arg-132 coordinates (2S)-2-hydroxy-3-oxobutyl phosphate.

It belongs to the DMRL synthase family.

The catalysed reaction is (2S)-2-hydroxy-3-oxobutyl phosphate + 5-amino-6-(D-ribitylamino)uracil = 6,7-dimethyl-8-(1-D-ribityl)lumazine + phosphate + 2 H2O + H(+). Its pathway is cofactor biosynthesis; riboflavin biosynthesis; riboflavin from 2-hydroxy-3-oxobutyl phosphate and 5-amino-6-(D-ribitylamino)uracil: step 1/2. Catalyzes the formation of 6,7-dimethyl-8-ribityllumazine by condensation of 5-amino-6-(D-ribitylamino)uracil with 3,4-dihydroxy-2-butanone 4-phosphate. This is the penultimate step in the biosynthesis of riboflavin. This is 6,7-dimethyl-8-ribityllumazine synthase from Prochlorococcus marinus (strain MIT 9515).